Consider the following 1004-residue polypeptide: Centriolar coiled-coil protein of 110 kDa (1004 aa).

The interval Met-1–Pro-221 is CEP97 binding. Residues Glu-51 to Gln-90 are a coiled coil. The tract at residues Leu-64 to Val-82 is calmodulin-binding. The segment at Gln-67–Val-82 is required for interaction with CEP290. Disordered regions lie at residues Pro-147–Ser-194 and Arg-239–Met-279. A Phosphoserine modification is found at Ser-170. Positions Ser-243 to Arg-252 are enriched in low complexity. Residues Ser-253–Ala-276 are compositionally biased toward basic and acidic residues. Residues Glu-349 to Asp-564 form an interaction with CEP76 region. Phosphoserine is present on residues Ser-364, Ser-370, and Ser-398. Residues Gly-401 to Val-433 form a disordered region. Over residues Glu-415–Val-433 the composition is skewed to polar residues. A Phosphoserine modification is found at Ser-550. Residues Gln-641–Asp-699 are a coiled coil. Calmodulin-binding regions lie at residues Gly-773–Lys-813 and Val-901–Phe-916. The segment at Leu-955 to Ile-1004 is disordered. Residues Gln-970 to Val-980 show a composition bias toward polar residues. A compositionally biased stretch (basic residues) spans Thr-994–Ile-1004.

Interacts with CALM1, CETN2, CEP76, CEP104, CEP290 and TALPID3. Interacts with CEP97. Seems to associate with discrete CETN2, CEP97 and CEP290-containing complexes. Interacts with NEURL4 and CCNF; these interactions are not mutually exclusive and both lead to CCP110 ubiquitination and proteasome-dependent degradation. Via its interaction with NEURL4, may indirectly interact with HERC2. Interacts with KIF24, leading to its recruitment to centrioles. Interacts with USP20 and USP33. Interacts with MPHOSPH9. Interacts (via N-terminal region) with ENKD1 (via central region); ENKD1 competes with CEP97 for binding to CCP110, destabilizing the interaction between CP110 and CEP97 which promotes the removal of CCP110 and CEP97 from the mother centriole and allows the initiation of ciliogenesis. Phosphorylated by CDKs. In terms of processing, ubiquitinated by the SCF(CCNF) during G2 phase, leading to its degradation by the proteasome and preventing centrosome reduplication. Deubiquitinated by USP33 in S and G2/M phase, leading to stabilize CCP110 during the period which centrioles duplicate and elongate. Ubiquitinated by the EDVP complex, leading to its degradation.

It is found in the cytoplasm. Its subcellular location is the cytoskeleton. It localises to the microtubule organizing center. The protein resides in the centrosome. The protein localises to the centriole. It is found in the cilium basal body. In terms of biological role, necessary for centrosome duplication at different stages of procentriole formation. Acts as a key negative regulator of ciliogenesis in collaboration with CEP97 by capping the mother centriole thereby preventing cilia formation. Also involved in promoting ciliogenesis. May play a role in the assembly of the mother centriole subdistal appendages (SDA) thereby effecting the fusion of recycling endosomes to basal bodies during cilia formation. Required for correct spindle formation and has a role in regulating cytokinesis and genome stability via cooperation with CALM1 and CETN2. The polypeptide is Centriolar coiled-coil protein of 110 kDa (Ccp110) (Mus musculus (Mouse)).